The following is a 283-amino-acid chain: Shikimate dehydrogenase (NADP(+)) (283 aa).

Residues 19-21 (SLS) and Thr66 each bind shikimate. Catalysis depends on Lys70, which acts as the Proton acceptor. Positions 91 and 106 each coordinate shikimate. Residues 129–133 (GAGGA), 153–158 (NRTPEK), and Leu224 each bind NADP(+). Tyr226 is a shikimate binding site. Gly247 lines the NADP(+) pocket.

This sequence belongs to the shikimate dehydrogenase family. As to quaternary structure, homodimer.

It carries out the reaction shikimate + NADP(+) = 3-dehydroshikimate + NADPH + H(+). The protein operates within metabolic intermediate biosynthesis; chorismate biosynthesis; chorismate from D-erythrose 4-phosphate and phosphoenolpyruvate: step 4/7. Functionally, involved in the biosynthesis of the chorismate, which leads to the biosynthesis of aromatic amino acids. Catalyzes the reversible NADPH linked reduction of 3-dehydroshikimate (DHSA) to yield shikimate (SA). The sequence is that of Shikimate dehydrogenase (NADP(+)) from Methanothermobacter thermautotrophicus (strain ATCC 29096 / DSM 1053 / JCM 10044 / NBRC 100330 / Delta H) (Methanobacterium thermoautotrophicum).